A 134-amino-acid polypeptide reads, in one-letter code: Arsenate reductase (134 aa).

Active-site nucleophile residues include Cys-11, Cys-83, and Cys-90. 2 disulfide bridges follow: Cys-11-Cys-83 and Cys-83-Cys-90.

The protein belongs to the low molecular weight phosphotyrosine protein phosphatase family. Thioredoxin-coupled ArsC subfamily.

It is found in the cytoplasm. The enzyme catalyses arsenate + [thioredoxin]-dithiol + H(+) = arsenite + [thioredoxin]-disulfide + H2O. Its function is as follows. Catalyzes the reduction of arsenate [As(V)] to arsenite [As(III)]. The sequence is that of Arsenate reductase from Bacillus cereus (strain ZK / E33L).